The primary structure comprises 60 residues: Mastoparan-V (60 aa).

The signal sequence occupies residues 1–27 (MKNTILILFTAFIALLGFFGMSAEALA). 4 AXPX repeats span residues 27 to 30 (ADPV), 31 to 34 (ADPL), 35 to 38 (AGPN), and 41 to 44 (ADPE). Residues 28–45 (DPVADPLAGPNAEADPEA) constitute a propeptide that is removed on maturation. Leucine 59 is modified (leucine amide).

This sequence belongs to the MCD family. Mastoparan subfamily. Expressed by the venom gland.

It is found in the secreted. The protein resides in the target cell membrane. Its function is as follows. Antimicrobial and mast cell degranulating peptide. Has broad spectrum antibacterial activity against both Gram-positive and Gram-negative bacteria (S.aureus MIC=32-64 ug/ml, S.xylosus MIC=3 ug/ml, S.alactolyticus MIC=16 ug/ml, C.koseri MIC=4 ug/ml, E.coli MIC=8 ug/ml, K.pneumoniae MIC=64 ug/ml, P.aerugiosa MIC=256 ug/ml, S.choleraesuis MIC=32 ug/ml, S.typhimurium MIC=32 ug/ml, V.parahamelytics MIC=32 ug/ml). Affects membrane permeability of E.coli. Shows hemolytic activities on sheep, chicken and human erythrocytes. Its mast cell degranulation activity may be related to the activation of G-protein coupled receptors in mast cells as well as interaction with other proteins located in cell endosomal membranes in the mast cells. This chain is Mastoparan-V, found in Vespa velutina flavitarsus (Asian hornet).